The chain runs to 977 residues: GAS2-like protein pickled eggs (977 aa).

The Calponin-homology (CH) domain occupies 20-159 (EAMREDLAEW…CLLEVARRGA (140 aa)). Residues 218–245 (VETDLYDDSDDSETEDDGDQNPVLMYGP) form a disordered region. Acidic residues predominate over residues 221-236 (DLYDDSDDSETEDDGD). The 73-residue stretch at 252–324 (NDLKSLDEMV…HYLDKHDPCR (73 aa)) folds into the GAR domain. Disordered stretches follow at residues 397 to 543 (PTLQ…SEIS), 557 to 624 (AQKR…VCDG), 666 to 685 (VANT…RSPL), 693 to 803 (IDNS…KGRS), and 910 to 977 (NLER…TELY). Polar residues-rich tracts occupy residues 399-428 (LQNG…NQQA) and 436-454 (ATGS…QLLG). Residues 502–527 (GGSGVGSAAGGVSSGSAGSGVAGEQG) show a composition bias toward gly residues. The span at 577-589 (RLDQTSSDSQISP) shows a compositional bias: polar residues. Residues 601-620 (ILEEEDLNGQDREEDQEDYS) are compositionally biased toward acidic residues. Composition is skewed to polar residues over residues 666–677 (VANTMGNPTPNL) and 731–741 (TRNSTGATTTP). Over residues 928–953 (SSAASSCESNNSNAGAGSGAAAGSAS) the composition is skewed to low complexity.

The protein belongs to the GAS2 family. Expressed in the ovary and the ring canals of the germline cells. In larvae, expressed in the notal region of the wing disk.

It localises to the cytoplasm. Its subcellular location is the cytoskeleton. The protein localises to the cell cortex. Essential for development and viability. Required for ovary development and oogenesis, and is essential for the development of the indirect flight muscles. May act as a negative regulator of the Notch signaling pathway in certain tissues, such as the muscle precursors and ovaries. May function as a linker protein between the actin and microtubule cytoskeletons. The protein is GAS2-like protein pickled eggs of Drosophila melanogaster (Fruit fly).